We begin with the raw amino-acid sequence, 102 residues long: Putative defensin-like protein 298 (102 aa).

An N-terminal signal peptide occupies residues 1-29 (MSASKATMLILFALFLSDILLVSIPRAEA). Intrachain disulfides connect Cys-35–Cys-53, Cys-41–Cys-58, Cys-46–Cys-60, Cys-74–Cys-93, Cys-80–Cys-98, and Cys-86–Cys-100.

It belongs to the DEFL family.

The protein localises to the secreted. This Arabidopsis thaliana (Mouse-ear cress) protein is Putative defensin-like protein 298.